The chain runs to 122 residues: Large ribosomal subunit protein uL14 (122 aa).

The protein belongs to the universal ribosomal protein uL14 family. In terms of assembly, part of the 50S ribosomal subunit. Forms a cluster with proteins L3 and L19. In the 70S ribosome, L14 and L19 interact and together make contacts with the 16S rRNA in bridges B5 and B8.

Its function is as follows. Binds to 23S rRNA. Forms part of two intersubunit bridges in the 70S ribosome. In Sulfurimonas denitrificans (strain ATCC 33889 / DSM 1251) (Thiomicrospira denitrificans (strain ATCC 33889 / DSM 1251)), this protein is Large ribosomal subunit protein uL14.